The following is a 449-amino-acid chain: Ribulose bisphosphate carboxylase large chain (449 aa).

Lysine 5 is modified (N6,N6,N6-trimethyllysine). Substrate-binding residues include asparagine 114 and threonine 164. Catalysis depends on lysine 166, which acts as the Proton acceptor. A substrate-binding site is contributed by lysine 168. Positions 192, 194, and 195 each coordinate Mg(2+). Residue lysine 192 is modified to N6-carboxylysine. Histidine 285 acts as the Proton acceptor in catalysis. Arginine 286, histidine 318, and serine 370 together coordinate substrate.

Belongs to the RuBisCO large chain family. Type I subfamily. As to quaternary structure, heterohexadecamer of 8 large chains and 8 small chains; disulfide-linked. The disulfide link is formed within the large subunit homodimers. The cofactor is Mg(2+). The disulfide bond which can form in the large chain dimeric partners within the hexadecamer appears to be associated with oxidative stress and protein turnover.

It localises to the plastid. The protein localises to the chloroplast. The catalysed reaction is 2 (2R)-3-phosphoglycerate + 2 H(+) = D-ribulose 1,5-bisphosphate + CO2 + H2O. It carries out the reaction D-ribulose 1,5-bisphosphate + O2 = 2-phosphoglycolate + (2R)-3-phosphoglycerate + 2 H(+). Functionally, ruBisCO catalyzes two reactions: the carboxylation of D-ribulose 1,5-bisphosphate, the primary event in carbon dioxide fixation, as well as the oxidative fragmentation of the pentose substrate in the photorespiration process. Both reactions occur simultaneously and in competition at the same active site. The protein is Ribulose bisphosphate carboxylase large chain of Zamioculcas zamiifolia (Aroid palm).